A 448-amino-acid polypeptide reads, in one-letter code: UDP-N-acetylmuramoylalanine--D-glutamate ligase (448 aa).

Position 112–118 (112–118 (GSNAKST)) interacts with ATP.

This sequence belongs to the MurCDEF family.

The protein resides in the cytoplasm. It catalyses the reaction UDP-N-acetyl-alpha-D-muramoyl-L-alanine + D-glutamate + ATP = UDP-N-acetyl-alpha-D-muramoyl-L-alanyl-D-glutamate + ADP + phosphate + H(+). It participates in cell wall biogenesis; peptidoglycan biosynthesis. In terms of biological role, cell wall formation. Catalyzes the addition of glutamate to the nucleotide precursor UDP-N-acetylmuramoyl-L-alanine (UMA). This chain is UDP-N-acetylmuramoylalanine--D-glutamate ligase, found in Acinetobacter baumannii (strain ATCC 17978 / DSM 105126 / CIP 53.77 / LMG 1025 / NCDC KC755 / 5377).